The chain runs to 435 residues: Serine hydroxymethyltransferase (435 aa).

Residues Leu133 and 137-139 (GHL) each bind (6S)-5,6,7,8-tetrahydrofolate. Lys242 is subject to N6-(pyridoxal phosphate)lysine.

This sequence belongs to the SHMT family. As to quaternary structure, homodimer. Requires pyridoxal 5'-phosphate as cofactor.

It localises to the cytoplasm. It carries out the reaction (6R)-5,10-methylene-5,6,7,8-tetrahydrofolate + glycine + H2O = (6S)-5,6,7,8-tetrahydrofolate + L-serine. Its pathway is one-carbon metabolism; tetrahydrofolate interconversion. It functions in the pathway amino-acid biosynthesis; glycine biosynthesis; glycine from L-serine: step 1/1. In terms of biological role, catalyzes the reversible interconversion of serine and glycine with tetrahydrofolate (THF) serving as the one-carbon carrier. This reaction serves as the major source of one-carbon groups required for the biosynthesis of purines, thymidylate, methionine, and other important biomolecules. Also exhibits THF-independent aldolase activity toward beta-hydroxyamino acids, producing glycine and aldehydes, via a retro-aldol mechanism. The sequence is that of Serine hydroxymethyltransferase from Sphingopyxis alaskensis (strain DSM 13593 / LMG 18877 / RB2256) (Sphingomonas alaskensis).